The following is a 309-amino-acid chain: Olfactory receptor 8A1 (309 aa).

The Extracellular portion of the chain corresponds to 1–28 (MTAENQSTVTEFILGGLTNRPELQLPLF). The chain crosses the membrane as a helical span at residues 29–49 (LLFLGIYVVTMVGNLGMITLI). Residues 50–56 (GLNSQLH) are Cytoplasmic-facing. A helical transmembrane segment spans residues 57–77 (TPMYFFLSNLSLVDLCYSSVI). Over 78–90 (TPKMLINFVSQRN) the chain is Extracellular. Residues 91–111 (LISYVGCMSQLYFFLVFVIAE) traverse the membrane as a helical segment. Residues Cys-97 and Cys-188 are joined by a disulfide bond. Residues 112-133 (CYMLTVMAYDRYVAICQPLLYN) are Cytoplasmic-facing. The chain crosses the membrane as a helical span at residues 134–154 (IIMSPALCSLLVAFVYAVGLI). At 155-195 (GSAIETGLMLKLNYCEDLISHYFCDILPLMKLSCSSTYDVE) the chain is on the extracellular side. Residues 196-216 (MAVFFLAGFDIIVTSLTVLIS) form a helical membrane-spanning segment. Residues 217 to 238 (YAFILSSILRISSNEGRSKAFS) lie on the Cytoplasmic side of the membrane. The chain crosses the membrane as a helical span at residues 239 to 259 (TCSSHFAAVGLFYGSTAFMYL). The Extracellular segment spans residues 260 to 270 (KPSTASSLAQE). Residues 271–291 (NVASVFYTTVIPMFNPLIYSL) form a helical membrane-spanning segment. The Cytoplasmic segment spans residues 292 to 309 (RNKEVKTALDKTLRRKVF).

It belongs to the G-protein coupled receptor 1 family.

The protein resides in the cell membrane. Its function is as follows. Odorant receptor. The chain is Olfactory receptor 8A1 from Mus musculus (Mouse).